A 100-amino-acid chain; its full sequence is MTAAHFMTDPQAMRDMARKFDMHAQNVRDESHKMFMSSMDIAGAGWSGTAQLTSHDTMGQINQAFRHIVTLLQDVRDQLGTAADRYEHQEENSRKILSGS.

The protein belongs to the WXG100 family.

This Mycobacterium leprae (strain TN) protein is Putative ESAT-6-like protein Y.